Consider the following 318-residue polypeptide: Tyrosine recombinase XerD (318 aa).

Residues 5–90 (PSDAKLTGLF…AMRHLYRFLL (86 aa)) enclose the Core-binding (CB) domain. A Tyr recombinase domain is found at 111-310 (GLPKVLSIAD…VEERLKSLVR (200 aa)). Residues Arg-161, Lys-185, His-262, Arg-265, and His-288 contribute to the active site. Catalysis depends on Tyr-297, which acts as the O-(3'-phospho-DNA)-tyrosine intermediate.

Belongs to the 'phage' integrase family. XerD subfamily. As to quaternary structure, forms a cyclic heterotetrameric complex composed of two molecules of XerC and two molecules of XerD.

It localises to the cytoplasm. In terms of biological role, site-specific tyrosine recombinase, which acts by catalyzing the cutting and rejoining of the recombining DNA molecules. The XerC-XerD complex is essential to convert dimers of the bacterial chromosome into monomers to permit their segregation at cell division. It also contributes to the segregational stability of plasmids. This chain is Tyrosine recombinase XerD, found in Bradyrhizobium diazoefficiens (strain JCM 10833 / BCRC 13528 / IAM 13628 / NBRC 14792 / USDA 110).